Reading from the N-terminus, the 288-residue chain is Protease HtpX (288 aa).

A run of 2 helical transmembrane segments spans residues 5–25 (IALFLATNFAVLILASIVMSL) and 35–55 (GLLVMAAIFGFGGSFISLLLS). His140 is a Zn(2+) binding site. The active site involves Glu141. His144 contacts Zn(2+). Transmembrane regions (helical) follow at residues 155 to 175 (LLQGVLNTFVIVLARVVGGII) and 194 to 214 (IIVFVLEMVFGLFATMISMWF). Glu219 contributes to the Zn(2+) binding site.

It belongs to the peptidase M48B family. Zn(2+) is required as a cofactor.

The protein resides in the cell inner membrane. This chain is Protease HtpX, found in Stenotrophomonas maltophilia (strain K279a).